Consider the following 613-residue polypeptide: Proteasome-associated ATPase (613 aa).

A disordered region spans residues Met-1–Glu-29. Residues Ser-23 to Gln-100 are a coiled coil. Residue Gly-300–Leu-305 coordinates ATP. An Isoglutamyl lysine isopeptide (Lys-Gln) (interchain with Q-Cter in protein Pup) cross-link involves residue Lys-595. The segment at Tyr-612 to Leu-613 is docks into pockets in the proteasome alpha-ring.

The protein belongs to the AAA ATPase family. Homohexamer. Assembles into a hexameric ring structure that caps the 20S proteasome core. Strongly interacts with the prokaryotic ubiquitin-like protein Pup through a hydrophobic interface; the interacting region of ARC lies in its N-terminal coiled-coil domain. There is one Pup binding site per ARC hexamer ring. Upon ATP-binding, the C-terminus of ARC interacts with the alpha-rings of the proteasome core, possibly by binding to the intersubunit pockets.

Its pathway is protein degradation; proteasomal Pup-dependent pathway. ATPase which is responsible for recognizing, binding, unfolding and translocation of pupylated proteins into the bacterial 20S proteasome core particle. May be essential for opening the gate of the 20S proteasome via an interaction with its C-terminus, thereby allowing substrate entry and access to the site of proteolysis. Thus, the C-termini of the proteasomal ATPase may function like a 'key in a lock' to induce gate opening and therefore regulate proteolysis. The chain is Proteasome-associated ATPase from Mycolicibacterium smegmatis (strain ATCC 700084 / mc(2)155) (Mycobacterium smegmatis).